A 165-amino-acid polypeptide reads, in one-letter code: MEEIFKVGQIVNTHGIKGEVKVYPLTEDVNKFKKLKNVLIDGKERNIQSVKFQKDRVILKIEGIDTMNDAETYKQKYIEIFRSNAPKLEADTHYVVDLVGCMVYDSDNVELGKIFDVISTPSNDVYWIKEPKQLLIPVLKDIVLDINIDNKKIVIKPVRQWQDED.

In terms of domain architecture, PRC barrel spans 89 to 161 (EADTHYVVDL…KIVIKPVRQW (73 aa)).

This sequence belongs to the RimM family. As to quaternary structure, binds ribosomal protein uS19.

The protein resides in the cytoplasm. In terms of biological role, an accessory protein needed during the final step in the assembly of 30S ribosomal subunit, possibly for assembly of the head region. Essential for efficient processing of 16S rRNA. May be needed both before and after RbfA during the maturation of 16S rRNA. It has affinity for free ribosomal 30S subunits but not for 70S ribosomes. The protein is Ribosome maturation factor RimM of Clostridium botulinum (strain Eklund 17B / Type B).